The sequence spans 226 residues: Protein BASIC PENTACYSTEINE7 (226 aa).

A disordered region spans residues 42 to 116; it reads IDLSQEPPAE…PSIPETKREK (75 aa). Residues 66–76 are compositionally biased toward basic and acidic residues; it reads RDSRNDTETVK. Over residues 88-105 the composition is skewed to basic residues; that stretch reads LKPKPQRKKRSVSNKSKK.

Belongs to the BBR/BPC family. Expressed in seedlings, leaves and pistils. Detected in anthers, in pollen grains, in young rosette, in leaf vasculature, in the lateral and primary roots, in embryo sac, and in the whole ovule.

It localises to the nucleus. Transcriptional regulator that specifically binds to GA-rich elements (GAGA-repeats) present in regulatory sequences of genes involved in developmental processes. The protein is Protein BASIC PENTACYSTEINE7 (BPC7) of Arabidopsis thaliana (Mouse-ear cress).